An 85-amino-acid polypeptide reads, in one-letter code: Homeobox protein liguleless 3 (85 aa).

The ELK domain maps to 1-21; it reads ELKEMLLKKYSGCLSRLRSEF. The segment at residues 22 to 85 is a DNA-binding region (homeobox; TALE-type); that stretch reads LKKRKKGKLP…NQRKRHWKPS (64 aa).

Belongs to the TALE/KNOX homeobox family.

It localises to the nucleus. Probably binds to the DNA sequence 5'-TGAC-3'. This Zea mays (Maize) protein is Homeobox protein liguleless 3 (LG3).